Here is a 112-residue protein sequence, read N- to C-terminus: Gastrula zinc finger protein XlCGF9.1 (112 aa).

4 consecutive C2H2-type zinc fingers follow at residues 6 to 28 (FICS…MKIH), 34 to 56 (FCCP…ERTH), 62 to 84 (FTCP…RIIH), and 90 to 112 (YSCP…FKIH).

Belongs to the krueppel C2H2-type zinc-finger protein family.

The protein resides in the nucleus. In terms of biological role, may be involved in transcriptional regulation. The polypeptide is Gastrula zinc finger protein XlCGF9.1 (Xenopus laevis (African clawed frog)).